We begin with the raw amino-acid sequence, 760 residues long: Sphingosine kinase B (760 aa).

The disordered stretch occupies residues 1–108; sequence MENNNNEPAE…NNNNNEPVTS (108 aa). Residues 12–39 are compositionally biased toward basic and acidic residues; that stretch reads VQEKGPKLKNDIDLNDQFKDEKEKKEEI. The segment covering 40-106 has biased composition (low complexity); sequence SSSSIENKNN…NNNNNNNEPV (67 aa). The region spanning 247-383 is the DAGKc domain; that stretch reads PKNRKIRILI…LDVCIVQQPT (137 aa). Residues 257-259 and T288 each bind ATP; that span reads NPK. 313–316 serves as a coordination point for substrate; it reads SGDG. D315 (proton donor/acceptor) is an active-site residue. ATP contacts are provided by residues E320 and 345 to 347; that span reads GTG. The tract at residues 394–438 is disordered; sequence TVTTTTTTTSPTSASPTITSANNNNNNNNNNNNNNNNNNNNNNNN. Residue D461 coordinates substrate. ATP contacts are provided by R468 and R474. The tract at residues 535-605 is disordered; that stretch reads DNDNNNKNKN…SSPRSDINMS (71 aa). Low complexity predominate over residues 549-597; sequence EINSTTSNNNNNNNTTTTSTSSSTSTSTSTSSLTATTTTAKSTNSLSSS. Position 734 to 736 (734 to 736) interacts with ATP; the sequence is DGE.

The enzyme catalyses a sphingoid base + ATP = a sphingoid 1-phosphate + ADP + H(+). Its activity is regulated as follows. Inhibited by N,N,-dimethylsphingosine. Catalyzes the phosphorylation of sphingosine to form sphingosine-1-phosphate (S1P), which probably acts intracellularly as a second messenger perhaps by promoting cell proliferation. The polypeptide is Sphingosine kinase B (sgkB) (Dictyostelium discoideum (Social amoeba)).